Reading from the N-terminus, the 188-residue chain is Putative nucleotidase OB0422 (188 aa).

This sequence belongs to the 5'(3')-deoxyribonucleotidase family.

The chain is Putative nucleotidase OB0422 from Oceanobacillus iheyensis (strain DSM 14371 / CIP 107618 / JCM 11309 / KCTC 3954 / HTE831).